Reading from the N-terminus, the 273-residue chain is Putative pyruvate, phosphate dikinase regulatory protein (273 aa).

149–156 (GPSRTSKT) is an ADP binding site.

The protein belongs to the pyruvate, phosphate/water dikinase regulatory protein family. PDRP subfamily.

It catalyses the reaction N(tele)-phospho-L-histidyl/L-threonyl-[pyruvate, phosphate dikinase] + ADP = N(tele)-phospho-L-histidyl/O-phospho-L-threonyl-[pyruvate, phosphate dikinase] + AMP + H(+). The catalysed reaction is N(tele)-phospho-L-histidyl/O-phospho-L-threonyl-[pyruvate, phosphate dikinase] + phosphate + H(+) = N(tele)-phospho-L-histidyl/L-threonyl-[pyruvate, phosphate dikinase] + diphosphate. Its function is as follows. Bifunctional serine/threonine kinase and phosphorylase involved in the regulation of the pyruvate, phosphate dikinase (PPDK) by catalyzing its phosphorylation/dephosphorylation. The polypeptide is Putative pyruvate, phosphate dikinase regulatory protein (Rickettsia rickettsii (strain Iowa)).